We begin with the raw amino-acid sequence, 702 residues long: MARTTPIELYRNIGIVAHVDAGKTTTTERILFYTGVNHKMGEVHDGAATMDWMVQEQERGITITSAATTAFWQGSTKQFPHRYRFNIIDTPGHVDFTIEVERSLRVLDGAVVVFSGADGVEPQSETVWRQANKYHVPRLAYVNKMDRQGADFLRVVAQIKQRLGHVPVPIQLAIGSEENFSGQIDLVKMKAIYWNDADQGTSYREEEIPAELRALAEEWRAHMVEAAAEANDELMNKYLEGEELSIEEIKAGLRQRTLANQIVPAVLGSSFKNKGVPLVLDAVIDYLPAPSEIPAIRGTDPDDEEKHDERHADDDEPFSALAFKIATDPFVGTLTFARVYSGVLTSGDAVLNSVKGKKERVGRMVQMHANQRDEIKEVRAGDIAALIGMKDVTTGDTLCAIDKPIILERMDFPDPVISVAVEPKTKADQEKMGIALSKLAQEDPSFRVKTDEETAQTIISGMGELHLDIIVDRMRREFGVEANIGKPQVAYRETIRNTCEIEGKFVRQSGGRGQFGHCWIRFAPADEGQEGLEFHNEVVGGVIPREFIPAIQKGIEDQMQNGVLAGYPLIGLKATVYDGSYHDVDSSEMAFKIAASMATKQLSQKGGAVLLEPVMKVEVVTPEDYMGDVMGDLNRRRGLIQGMEDTPAGKVIRAEVPLGEMFGYATDVRSMSQGRASYSMEFVRYAEVPASVAEGIVARQGR.

Positions 8–291 constitute a tr-type G domain; it reads ELYRNIGIVA…AVIDYLPAPS (284 aa). GTP is bound by residues 17–24, 89–93, and 143–146; these read AHVDAGKT, DTPGH, and NKMD. Residues 293-314 form a disordered region; it reads IPAIRGTDPDDEEKHDERHADD.

Belongs to the TRAFAC class translation factor GTPase superfamily. Classic translation factor GTPase family. EF-G/EF-2 subfamily.

It localises to the cytoplasm. Functionally, catalyzes the GTP-dependent ribosomal translocation step during translation elongation. During this step, the ribosome changes from the pre-translocational (PRE) to the post-translocational (POST) state as the newly formed A-site-bound peptidyl-tRNA and P-site-bound deacylated tRNA move to the P and E sites, respectively. Catalyzes the coordinated movement of the two tRNA molecules, the mRNA and conformational changes in the ribosome. This Pseudomonas aeruginosa (strain ATCC 15692 / DSM 22644 / CIP 104116 / JCM 14847 / LMG 12228 / 1C / PRS 101 / PAO1) protein is Elongation factor G 2 (fusB).